The primary structure comprises 397 residues: Trans-2-enoyl-CoA reductase [NADH] (397 aa).

NAD(+) contacts are provided by residues 53-58, 79-80, 116-117, and 144-145; these read GCSNGY, FE, DA, and LA. Position 230 (tyrosine 230) interacts with substrate. Tyrosine 240 acts as the Proton donor in catalysis. NAD(+)-binding positions include lysine 249 and 276 to 278; that span reads LVT.

The protein belongs to the TER reductase family. In terms of assembly, monomer.

It catalyses the reaction a 2,3-saturated acyl-CoA + NAD(+) = a (2E)-enoyl-CoA + NADH + H(+). It participates in lipid metabolism; fatty acid biosynthesis. Inhibited by lauroyl-CoA. Functionally, involved in the fatty acid synthesis (FAS II). Catalyzes the reduction of the carbon-carbon double bond of crotonyl-CoA to yield butyryl-CoA. In vitro it can also use hexenoyl-CoA and dodecenoyl-CoA as substrates. The sequence is that of Trans-2-enoyl-CoA reductase [NADH] from Treponema denticola (strain ATCC 35405 / DSM 14222 / CIP 103919 / JCM 8153 / KCTC 15104).